The sequence spans 138 residues: Small ribosomal subunit protein uS11c (138 aa).

The segment at Met1–Arg23 is disordered. A compositionally biased stretch (basic residues) spans Gly9–Arg23.

Belongs to the universal ribosomal protein uS11 family. In terms of assembly, part of the 30S ribosomal subunit.

Its subcellular location is the plastid. The protein localises to the chloroplast. This chain is Small ribosomal subunit protein uS11c, found in Vitis vinifera (Grape).